The sequence spans 457 residues: tRNA modification GTPase MnmE (457 aa).

3 residues coordinate (6S)-5-formyl-5,6,7,8-tetrahydrofolate: Arg22, Glu85, and Arg124. The 160-residue stretch at 219–378 folds into the TrmE-type G domain; that stretch reads GATVVIAGKP…LKEKIYDLVL (160 aa). Asn229 serves as a coordination point for K(+). GTP-binding positions include 229 to 234, 248 to 254, 273 to 276, and 333 to 336; these read NTGKSS, TPVPGTT, DTAG, and NKAD. Ser233 serves as a coordination point for Mg(2+). K(+) is bound by residues Thr248, Val250, and Thr253. Residue Thr254 coordinates Mg(2+). Lys457 lines the (6S)-5-formyl-5,6,7,8-tetrahydrofolate pocket.

The protein belongs to the TRAFAC class TrmE-Era-EngA-EngB-Septin-like GTPase superfamily. TrmE GTPase family. In terms of assembly, homodimer. Heterotetramer of two MnmE and two MnmG subunits. Requires K(+) as cofactor.

It localises to the cytoplasm. In terms of biological role, exhibits a very high intrinsic GTPase hydrolysis rate. Involved in the addition of a carboxymethylaminomethyl (cmnm) group at the wobble position (U34) of certain tRNAs, forming tRNA-cmnm(5)s(2)U34. In Syntrophus aciditrophicus (strain SB), this protein is tRNA modification GTPase MnmE.